A 217-amino-acid chain; its full sequence is ATP-dependent Clp protease proteolytic subunit (217 aa).

The active-site Nucleophile is S121. H146 is a catalytic residue.

Belongs to the peptidase S14 family. Fourteen ClpP subunits assemble into 2 heptameric rings which stack back to back to give a disk-like structure with a central cavity, resembling the structure of eukaryotic proteasomes.

Its subcellular location is the cytoplasm. It catalyses the reaction Hydrolysis of proteins to small peptides in the presence of ATP and magnesium. alpha-casein is the usual test substrate. In the absence of ATP, only oligopeptides shorter than five residues are hydrolyzed (such as succinyl-Leu-Tyr-|-NHMec, and Leu-Tyr-Leu-|-Tyr-Trp, in which cleavage of the -Tyr-|-Leu- and -Tyr-|-Trp bonds also occurs).. Cleaves peptides in various proteins in a process that requires ATP hydrolysis. Has a chymotrypsin-like activity. Plays a major role in the degradation of misfolded proteins. The protein is ATP-dependent Clp protease proteolytic subunit of Burkholderia vietnamiensis (strain G4 / LMG 22486) (Burkholderia cepacia (strain R1808)).